A 170-amino-acid polypeptide reads, in one-letter code: MGNEASYPAEMCSHFDNDEIKRLGRRFKKLDLDKSGSLSVEEFMSLPELRHNPLVRRVIDVFDTDGDGEVDFKEFILGTSQFSVKGDEEQKLRFAFSIYDMDKDGYISNGELFQVLKMMVGNNLTDWQLQQLVDKTIIILDKDGDGKISFEEFSAVVRDLEIHKKLVLIV.

The N-myristoyl glycine moiety is linked to residue G2. EF-hand domains follow at residues 18-46 (DEIK…FMSL), 50-85 (RHNP…FSVK), 87-122 (DEEQ…MVGN), and 128-163 (QLQQ…LEIH). 15 residues coordinate Ca(2+): D31, D33, S35, S37, E42, D63, D65, D67, E69, E74, D100, D102, D104, Y106, and E111. Residues 131–136 (QLVDKT) are calcineurin A binding. Positions 141, 143, 145, 147, and 152 each coordinate Ca(2+).

Belongs to the calcineurin regulatory subunit family. In terms of assembly, forms a complex composed of a calmodulin-dependent catalytic subunit (also known as calcineurin A) and a regulatory Ca(2+)-binding subunit (also known as calcineurin B). There are three catalytic subunits, each encoded by a separate gene (PPP3CA, PPP3CB, and PPP3CC) and two regulatory subunits which are also encoded by separate genes (PPP3R1 and PPP3R2). Interacts with SPATA33 (via PQIIIT motif). Testis-specific.

It localises to the mitochondrion. Its function is as follows. Regulatory subunit of calcineurin, a calcium-dependent, calmodulin stimulated protein phosphatase. Confers calcium sensitivity. This is Calcineurin subunit B type 2 (PPP3R2) from Homo sapiens (Human).